Reading from the N-terminus, the 295-residue chain is Transcriptional regulator SirC (295 aa).

The 98-residue stretch at 195–292 (EKVYNIIISD…KITPLSFMRT (98 aa)) folds into the HTH araC/xylS-type domain. 2 consecutive DNA-binding regions (H-T-H motif) follow at residues 212-233 (AEVA…AAEE) and 259-282 (ISQV…KRHF).

In terms of biological role, positive regulator of the expression of the invasion-associated type III secretion system encoded within SPI-1 (pathogenicity island 1). The sequence is that of Transcriptional regulator SirC (sirC) from Salmonella typhimurium (strain SL1344).